We begin with the raw amino-acid sequence, 1040 residues long: Multidrug resistance protein MdtB (1040 aa).

Helical transmembrane passes span 16 to 36 (FIMR…AGII), 347 to 367 (LMMA…NIPA), 369 to 389 (IIPG…MVFL), 396 to 416 (LTLM…IVVI), 440 to 460 (IGFT…PLLF), 472 to 492 (FAIT…TLTP), 537 to 557 (WLTL…WVFI), 863 to 883 (LGST…VLGI), 888 to 908 (FIHP…ALLA), 911 to 931 (IAGS…IGIV), 968 to 988 (ILMT…STGV), and 998 to 1018 (IGMV…TPVI).

The protein belongs to the resistance-nodulation-cell division (RND) (TC 2.A.6) family. MdtB subfamily. In terms of assembly, part of a tripartite efflux system composed of MdtA, MdtB and MdtC. MdtB forms a heteromultimer with MdtC.

The protein localises to the cell inner membrane. In terms of biological role, the MdtABC tripartite complex confers resistance against novobiocin and deoxycholate. The chain is Multidrug resistance protein MdtB from Escherichia coli O8 (strain IAI1).